An 88-amino-acid chain; its full sequence is Large ribosomal subunit protein uL29 (88 aa).

The protein belongs to the universal ribosomal protein uL29 family.

The sequence is that of Large ribosomal subunit protein uL29 (rpl29) from Sulfurisphaera tokodaii (strain DSM 16993 / JCM 10545 / NBRC 100140 / 7) (Sulfolobus tokodaii).